The primary structure comprises 729 residues: Fibroblast growth factor receptor homolog 1 (729 aa).

Positions 1–36 are cleaved as a signal peptide; sequence MAAAWSWRASHSTITMTSGSLVVLFLLLSIWQPAVQ. Over 37 to 309 the chain is Extracellular; the sequence is VEGRRQMANS…VASGSLHSTS (273 aa). The tract at residues 56–101 is disordered; it reads ARSQNKTPAITNNANQSSTSSADLDDGAADDDDNKADLPVNVSSKP. The span at 66 to 77 shows a compositional bias: low complexity; that stretch reads TNNANQSSTSSA. Residue asparagine 70 is glycosylated (N-linked (GlcNAc...) asparagine). Residues 78–89 are compositionally biased toward acidic residues; the sequence is DLDDGAADDDDN. Residues asparagine 96, asparagine 134, asparagine 140, asparagine 171, asparagine 207, asparagine 213, asparagine 242, asparagine 246, and asparagine 282 are each glycosylated (N-linked (GlcNAc...) asparagine). 2 consecutive Ig-like C2-type domains span residues 106-192 and 203-279; these read PKKM…VIVS and TGPL…NSLG. The cysteines at positions 125 and 174 are disulfide-linked. An intrachain disulfide couples cysteine 220 to cysteine 272. Residues 310–330 form a helical membrane-spanning segment; that stretch reads FVYIFVFGGLIFIFMTTLFVF. At 331–729 the chain is on the cytoplasmic side; that stretch reads YAIRKMKHEK…TDNLQKWCNY (399 aa). A Protein kinase domain is found at 416–692; sequence LVLGATLGEG…EIVEYMDKLL (277 aa). ATP-binding positions include 422 to 430 and lysine 443; that span reads LGEGAFGRV. Aspartate 556 functions as the Proton acceptor in the catalytic mechanism. The residue at position 587 (tyrosine 587) is a Phosphotyrosine; by autocatalysis.

It belongs to the protein kinase superfamily. Tyr protein kinase family. Fibroblast growth factor receptor subfamily. In terms of tissue distribution, in early embryos, expression is specific to mesodermal primordium and invaginated mesodermal cells. At later stages, expression is seen in putative muscle precursor cells and in the CNS.

The protein resides in the membrane. The catalysed reaction is L-tyrosyl-[protein] + ATP = O-phospho-L-tyrosyl-[protein] + ADP + H(+). In terms of biological role, may be required for patterning of muscle precursor cells. May be essential for generation of mesodermal and endodermal layers, invaginations of various types of cells and CNS formation. The polypeptide is Fibroblast growth factor receptor homolog 1 (htl) (Drosophila melanogaster (Fruit fly)).